Here is a 989-residue protein sequence, read N- to C-terminus: ATP-dependent 6-phosphofructokinase subunit alpha (989 aa).

Positions 1–585 (MPEPSISDLS…SYENFLSVSK (585 aa)) are N-terminal catalytic PFK domain 1. ATP is bound by residues Gly-220, 283-284 (RC), and 313-316 (GDGS). Asp-314 contacts Mg(2+). Beta-D-fructose 6-phosphate is bound by residues 359–361 (SID), Arg-396, 403–405 (MGR), Glu-460, Arg-487, and 493–496 (HVQR). The active-site Proton acceptor is Asp-361. The interdomain linker stretch occupies residues 586 to 599 (YDDGSYLVPESSRL). The tract at residues 600–989 (NIAIIHVGAP…LSGRLSIRTT (390 aa)) is C-terminal regulatory PFK domain 2. Residues Arg-670, 727 to 731 (TVSNN), Arg-765, 772 to 774 (QGG), Glu-832, Arg-858, 864 to 867 (HVQQ), and Arg-963 each bind beta-D-fructose 2,6-bisphosphate.

It belongs to the phosphofructokinase type A (PFKA) family. ATP-dependent PFK group I subfamily. Eukaryotic two domain clade 'E' sub-subfamily. As to quaternary structure, heterododecamer of 4 alpha, 4 beta and 4 gamma chains. Requires Mg(2+) as cofactor.

It localises to the cytoplasm. The catalysed reaction is beta-D-fructose 6-phosphate + ATP = beta-D-fructose 1,6-bisphosphate + ADP + H(+). The protein operates within carbohydrate degradation; glycolysis; D-glyceraldehyde 3-phosphate and glycerone phosphate from D-glucose: step 3/4. With respect to regulation, allosterically activated by ADP, AMP, or fructose 2,6-bisphosphate, and allosterically inhibited by ATP or citrate. Its function is as follows. Catalyzes the phosphorylation of D-fructose 6-phosphate to fructose 1,6-bisphosphate by ATP, the first committing step of glycolysis. This is ATP-dependent 6-phosphofructokinase subunit alpha (PFK1) from Komagataella pastoris (Yeast).